The sequence spans 624 residues: Chaperone protein HtpG (624 aa).

The tract at residues 1 to 336 (MNMKGQETRG…SNDLPLNVSR (336 aa)) is a; substrate-binding. The b stretch occupies residues 337–552 (EILQDSRITQ…ADEMSTQMAK (216 aa)). Residues 553 to 624 (LFAAAGQQAP…IRRMNQLLTA (72 aa)) are c.

Belongs to the heat shock protein 90 family. Homodimer.

Its subcellular location is the cytoplasm. Its function is as follows. Molecular chaperone. Has ATPase activity. This is Chaperone protein HtpG from Yersinia pestis bv. Antiqua (strain Antiqua).